A 726-amino-acid chain; its full sequence is tRNA endonuclease ANKZF1 (726 aa).

The disordered stretch occupies residues 40 to 61 (LARAPRTSCSGSGERESPERKL). The segment covering 52–61 (GERESPERKL) has biased composition (basic and acidic residues). The C2H2-type zinc finger occupies 72–96 (LFCSTCDQTFQNHQEQREHYKLDWH). Over residues 120–130 (STGDLSSISGS) the composition is skewed to low complexity. The tract at residues 120–141 (STGDLSSISGSEDSDSASEEDL) is disordered. Acidic residues predominate over residues 131-141 (EDSDSASEEDL). The region spanning 203-346 (GPRDCVVLMA…QRVLHKLTTL (144 aa)) is the VLRF1 domain. Residue Q246 is part of the active site. S258, S361, and S398 each carry phosphoserine. Disordered regions lie at residues 387-409 (DEKEALGQNEESPKQGSGSEGED) and 436-474 (RRRRKRNKKEKSRDQEAGAHRTLLQQTQEEEPSTQSSQA). Residues 436–445 (RRRRKRNKKE) are compositionally biased toward basic residues. A compositionally biased stretch (low complexity) spans 457 to 473 (TLLQQTQEEEPSTQSSQ). An ANK 1 repeat occupies 493–526 (ELWNALLAACRAGDVGVLKLQLAPSPADPRVLSL). S533 carries the phosphoserine modification. The ANK 2 repeat unit spans residues 534 to 563 (GGFTLLHAAAAAGRGSVVRLLLEAGADPTV). A disordered region spans residues 588 to 656 (MEKNPDAYDY…RRFAALSDRE (69 aa)). Phosphothreonine is present on T607. A coiled-coil region spans residues 609 to 659 (EMEARQATRKREQKAARRQREEQQQRQQEQEEREREEQRRFAALSDREKRA). Positions 610-656 (MEARQATRKREQKAARRQREEQQQRQQEQEEREREEQRRFAALSDRE) are enriched in basic and acidic residues. The interval 654–666 (DREKRALAAERRL) is VCP/p97-interacting motif (VIM). Residues S675 and S680 each carry the phosphoserine modification.

It belongs to the ANKZF1/VMS1 family. Interacts (via VIM motif) with VCP.

The protein localises to the cytoplasm. Endonuclease that cleaves polypeptidyl-tRNAs downstream of the ribosome-associated quality control (RQC) pathway to release incompletely synthesized polypeptides for degradation. The RQC pathway disassembles aberrantly stalled translation complexes to recycle or degrade the constituent parts. ANKZF1 acts downstream disassembly of stalled ribosomes and specifically cleaves off the terminal 3'-CCA nucleotides universal to all tRNAs from polypeptidyl-tRNAs, releasing (1) ubiquitinated polypeptides from 60S ribosomal subunit for degradation and (2) cleaved tRNAs. ANKZF1-cleaved tRNAs are then repaired and recycled by ELAC1 and TRNT1. Also plays a role in the cellular response to hydrogen peroxide and in the maintenance of mitochondrial integrity under conditions of cellular stress. The sequence is that of tRNA endonuclease ANKZF1 from Homo sapiens (Human).